The primary structure comprises 276 residues: Large ribosomal subunit protein uL2 (276 aa).

Disordered regions lie at residues 33-55 (LVEAQGRSGGRNNNGRITSRHIG) and 221-276 (RGTA…AKKK).

It belongs to the universal ribosomal protein uL2 family. As to quaternary structure, part of the 50S ribosomal subunit. Forms a bridge to the 30S subunit in the 70S ribosome.

Its function is as follows. One of the primary rRNA binding proteins. Required for association of the 30S and 50S subunits to form the 70S ribosome, for tRNA binding and peptide bond formation. It has been suggested to have peptidyltransferase activity; this is somewhat controversial. Makes several contacts with the 16S rRNA in the 70S ribosome. This Psychrobacter sp. (strain PRwf-1) protein is Large ribosomal subunit protein uL2.